We begin with the raw amino-acid sequence, 505 residues long: MITNDLIAQHSLTLTIASSVLLVFLLSRLLRKDATGKAQGCRPVAKRWQWDPILGLDIVLAQIGALKGNYYLPWLIELHSNMPKTFEINFFGKRQIYTSEPDNLKAMTATNFHDFGIEPMRRHTKGSMPFADKGISTVDGKEWEFSRFLLKPFFYREVYTSTDRIEPFADHMMALIPGDGESFNMQSLIQRWFLDLTTNFIFGKPMDALENPDRARITWAMLDVLKGGRLRAQFYMMMWAFNWTWWYKAVAEVHDFINVHIRETYKEIEEREQRIKDGKPVEPERTDLIWYMAWNLRDEELLRSQLCLVFVPNNDTTSIFISNCIWHLARHPEAWEKLRQEVLAHGDAPLTFEALRNMKYLQCVLNETHRLTPNNVTQIRVCLNDSVLPVGGGKNAKEPFFVRKGDVVSITKTVMYRDPEIWGNDAEEFKPERFDGRRVFWEFLPFGGGPRRCPAQMMVQTEAAYMLARLARVYRRIEARDPAPYTAVMRIGPSNKTGVQIAVYK.

A helical membrane pass occupies residues 6–26 (LIAQHSLTLTIASSVLLVFLL). Cys453 lines the heme pocket.

Belongs to the cytochrome P450 family. Heme is required as a cofactor.

It localises to the membrane. The catalysed reaction is (3E,5S)-3-[(2E,4E,8S,10E,12Z)-1-hydroxy-4,8-dimethyltetradeca-2,4,10,12-tetraen-1-ylidene]-5-[(4-hydroxyphenyl)methyl]pyrrolidine-2,4-dione + reduced [NADPH--hemoprotein reductase] + O2 = 3-[(2E,4E,8S,10E,12Z)-4,8-dimethyltetradeca-2,4,10,12-tetraenoyl]-4-hydroxy-5-(4-hydroxyphenyl)-1,2-dihydropyridin-2-one + oxidized [NADPH--hemoprotein reductase] + 2 H2O. It functions in the pathway mycotoxin biosynthesis. Cytochrome P450 monooxygenase; part of the gene cluster that mediates the biosynthesis of ilicicolin H, a 4-hydroxy-2-pyridonealkaloid that has potent and broad antifungal activities by inhibiting the mitochondrial respiration chain. IliC catalyzes the ring expansion of the tetramate intermediate to the acyclic 2-pyridone intermediate that contains the trans bis-diene chain. The biosynthesis of ilicicolin H starts with formation of the tetramic acid by the hybrid PKS-NRPS synthetase iliA with the partnering trans-enoyl reductase iliB since iliA lacks a designated enoylreductase (ER) domain. The cytochrome P450 monooxygenase iliC then catalyzes the ring expansion of the tetramate to the acyclic 2-pyridone. The pericyclase iliD further converts the acyclic 2-pyridone into 8-epi-ilicicolin H. 8-epi-ilicicolin H might then spontaneously convert to ilicicolin H since ilicicolin H is produced in the absence of the epimerase iliE, in contrast to what was observed for the Talaromyces variabilis ilicolin H biosynthetic pathway. This chain is Cytochrome P450 monooxygenase iliC, found in Neonectria sp. (strain DH2).